The sequence spans 90 residues: MAIRCEKFVVSGIVQGVGFRYHTSHQGLKLNLVGYAKNLYNGDVEVIACGEPLKIEEFAKWLEQGPKTARVDELKREEITCREYQGFEIL.

An Acylphosphatase-like domain is found at 5–90; the sequence is CEKFVVSGIV…CREYQGFEIL (86 aa). Catalysis depends on residues Arg20 and Asn38.

It belongs to the acylphosphatase family.

It catalyses the reaction an acyl phosphate + H2O = a carboxylate + phosphate + H(+). The chain is Acylphosphatase (acyP) from Vibrio vulnificus (strain CMCP6).